A 290-amino-acid polypeptide reads, in one-letter code: Bifunctional protein FolD (290 aa).

NADP(+) is bound by residues 166–168 and I232; that span reads GAS.

It belongs to the tetrahydrofolate dehydrogenase/cyclohydrolase family. In terms of assembly, homodimer.

The catalysed reaction is (6R)-5,10-methylene-5,6,7,8-tetrahydrofolate + NADP(+) = (6R)-5,10-methenyltetrahydrofolate + NADPH. It catalyses the reaction (6R)-5,10-methenyltetrahydrofolate + H2O = (6R)-10-formyltetrahydrofolate + H(+). Its pathway is one-carbon metabolism; tetrahydrofolate interconversion. Its function is as follows. Catalyzes the oxidation of 5,10-methylenetetrahydrofolate to 5,10-methenyltetrahydrofolate and then the hydrolysis of 5,10-methenyltetrahydrofolate to 10-formyltetrahydrofolate. The polypeptide is Bifunctional protein FolD (Proteus mirabilis (strain HI4320)).